The following is a 291-amino-acid chain: T-cell leukemia homeobox protein 3 (291 aa).

A disordered region spans residues 1 to 56 (MEAPASAQTPHPHEPISFGIDQILNSPDQDSAPAPRGPDGASYLGGPPGGRPGATY). The segment at residues 166–225 (RKKPRTSFSRVQICELEKRFHRQKYLASAERAALAKSLKMTDAQVKTWFQNRRTKWRRQT) is a DNA-binding region (homeobox).

The protein localises to the nucleus. The polypeptide is T-cell leukemia homeobox protein 3 (TLX3) (Homo sapiens (Human)).